Reading from the N-terminus, the 206-residue chain is Small ribosomal subunit protein uS4 (206 aa).

In terms of domain architecture, S4 RNA-binding spans 98–155; the sequence is TRLDNVVYRLGWALSRDQARQLVSHGKIAVNGKRVNIPSYNLKPGDVVELLDKDLIPV.

This sequence belongs to the universal ribosomal protein uS4 family. Part of the 30S ribosomal subunit. Contacts protein S5. The interaction surface between S4 and S5 is involved in control of translational fidelity.

One of the primary rRNA binding proteins, it binds directly to 16S rRNA where it nucleates assembly of the body of the 30S subunit. Its function is as follows. With S5 and S12 plays an important role in translational accuracy. The chain is Small ribosomal subunit protein uS4 from Dictyoglomus thermophilum (strain ATCC 35947 / DSM 3960 / H-6-12).